Here is a 154-residue protein sequence, read N- to C-terminus: Small ribosomal subunit protein bS18 (154 aa).

The interval 1–82 (MEKKTTKKAT…PFAKYNRGYP (82 aa)) is disordered. Residues 8–19 (KATASKTTTTKK) show a composition bias toward low complexity. Residues 20 to 32 (AAAEKTEIKETKK) are compositionally biased toward basic and acidic residues. Positions 33–49 (TTTTKTSTAKKATTASV) are enriched in low complexity. A compositionally biased stretch (basic and acidic residues) spans 50 to 69 (EKTEVKETKKSSDNKKEFNP).

This sequence belongs to the bacterial ribosomal protein bS18 family. In terms of assembly, part of the 30S ribosomal subunit. Forms a tight heterodimer with protein bS6.

Functionally, binds as a heterodimer with protein bS6 to the central domain of the 16S rRNA, where it helps stabilize the platform of the 30S subunit. This chain is Small ribosomal subunit protein bS18, found in Malacoplasma penetrans (strain HF-2) (Mycoplasma penetrans).